A 528-amino-acid polypeptide reads, in one-letter code: T-complex protein 1 subunit delta (528 aa).

It belongs to the TCP-1 chaperonin family. Heterooligomeric complex of about 850 to 900 kDa that forms two stacked rings, 12 to 16 nm in diameter.

Its subcellular location is the cytoplasm. Functionally, molecular chaperone; assists the folding of proteins upon ATP hydrolysis. Known to play a role, in vitro, in the folding of actin and tubulin. In yeast may play a role in mitotic spindle formation. The polypeptide is T-complex protein 1 subunit delta (CCT4) (Saccharomyces cerevisiae (strain ATCC 204508 / S288c) (Baker's yeast)).